The chain runs to 332 residues: L-lactate dehydrogenase A chain (332 aa).

Residues 29–57 (GAVG…VEDK) and R99 contribute to the NAD(+) site. Positions 106, 138, and 169 each coordinate substrate. An NAD(+)-binding site is contributed by N138. H193 (proton acceptor) is an active-site residue. Residue T248 participates in substrate binding.

The protein belongs to the LDH/MDH superfamily. LDH family. In terms of assembly, homotetramer.

It is found in the cytoplasm. The catalysed reaction is (S)-lactate + NAD(+) = pyruvate + NADH + H(+). Its pathway is fermentation; pyruvate fermentation to lactate; (S)-lactate from pyruvate: step 1/1. Functionally, interconverts simultaneously and stereospecifically pyruvate and lactate with concomitant interconversion of NADH and NAD(+). This is L-lactate dehydrogenase A chain (LDHA) from Python regius (Ball python).